Reading from the N-terminus, the 522-residue chain is MALLPRALSAGAGPSWRRAARAFRGFLLLLPEPAALTRALSRAMACRQEPQPQGPPPAAGAVASYDYLVIGGGSGGLASARRAAELGARAAVVESHKLGGTCVNVGCVPKKVMWNTAVHSEFMHDHADYGFPSCEGKFNWRVIKEKRDAYVSRLNAIYQNNLTKSHIEIIRGHAAFTSDPKPTIEVSGKKYTAPHILIATGGMPSTPHESQIPGASLGITSDGFFQLEELPGRSVIVGAGYIAVEMAGILSALGSKTSLMIRHDKVLRSFDSMISTNCTEELENAGVEVLKFSQVKEVKKTLSGLEVSMVTAVPGRLPVMTMIPDVDCLLWAIGRVPNTKDLSLNKLGIQTDDKGHIIVDEFQNTNVKGIYAVGDVCGKALLTPVAIAAGRKLAHRLFEYKEDSKLDYNNIPTVVFSHPPIGTVGLTEDEAIHKYGIENVKTYSTSFTPMYHAVTKRKTKCVMKMVCANKEEKVVGIHMQGLGCDEMLQGFAVAVKMGATKADFDNTVAIHPTSSEELVTLR.

A mitochondrion-targeting transit peptide spans 1-43 (MALLPRALSAGAGPSWRRAARAFRGFLLLLPEPAALTRALSRA). The FAD site is built by serine 74 and glycine 75. Serine 74 serves as a coordination point for glutathione. Glutathione is bound at residue arginine 81. Glutamate 94 is a binding site for FAD. N6-acetyllysine is present on lysine 97. Positions 101, 102, and 110 each coordinate FAD. Cysteines 102 and 107 form a disulfide. Tyrosine 158 is a glutathione binding site. An FAD-binding site is contributed by alanine 174. NADP(+)-binding residues include alanine 239, isoleucine 242, glutamate 245, arginine 262, arginine 268, and glycine 334. Aspartate 375 provides a ligand contact to FAD. NADP(+) is bound at residue leucine 381. Position 383 (threonine 383) interacts with FAD. Arginine 391 serves as a coordination point for glutathione. Valine 414 serves as a coordination point for NADP(+). Histidine 511 is a binding site for FAD. The active-site Proton acceptor is histidine 511.

It belongs to the class-I pyridine nucleotide-disulfide oxidoreductase family. In terms of assembly, homodimer; disulfide-linked. Requires FAD as cofactor.

It is found in the mitochondrion. The protein localises to the cytoplasm. It carries out the reaction 2 glutathione + NADP(+) = glutathione disulfide + NADPH + H(+). In terms of biological role, catalyzes the reduction of glutathione disulfide (GSSG) to reduced glutathione (GSH). Constitutes the major mechanism to maintain a high GSH:GSSG ratio in the cytosol. The sequence is that of Glutathione reductase, mitochondrial (GSR) from Homo sapiens (Human).